The primary structure comprises 994 residues: Protein translocase subunit SecA (994 aa).

ATP-binding positions include glutamine 85, glycine 103 to threonine 107, and aspartate 492. The segment covering isoleucine 868 to glutamine 888 has biased composition (low complexity). The segment at isoleucine 868–glutamate 994 is disordered. Over residues threonine 889–proline 900 the composition is skewed to pro residues. Positions 973, 975, 984, and 985 each coordinate Zn(2+). Residues cysteine 984–glutamate 994 show a composition bias toward basic and acidic residues.

Belongs to the SecA family. Monomer and homodimer. Part of the essential Sec protein translocation apparatus which comprises SecA, SecYEG and auxiliary proteins SecDF. Other proteins may also be involved. Zn(2+) is required as a cofactor.

The protein localises to the cell membrane. It is found in the cytoplasm. The catalysed reaction is ATP + H2O + cellular proteinSide 1 = ADP + phosphate + cellular proteinSide 2.. Functionally, part of the Sec protein translocase complex. Interacts with the SecYEG preprotein conducting channel. Has a central role in coupling the hydrolysis of ATP to the transfer of proteins into and across the cell membrane, serving as an ATP-driven molecular motor driving the stepwise translocation of polypeptide chains across the membrane. The sequence is that of Protein translocase subunit SecA from Frankia casuarinae (strain DSM 45818 / CECT 9043 / HFP020203 / CcI3).